Consider the following 671-residue polypeptide: DNA ligase (671 aa).

Residues 32 to 36, 81 to 82, and E113 each bind NAD(+); these read DAEYD and SL. K115 acts as the N6-AMP-lysine intermediate in catalysis. The NAD(+) site is built by R136, E173, K290, and K314. Positions 408, 411, 426, and 432 each coordinate Zn(2+). Residues 593 to 671 form the BRCT domain; it reads EIDSPFAGKT…EAEMLRLLGS (79 aa).

This sequence belongs to the NAD-dependent DNA ligase family. LigA subfamily. Mg(2+) serves as cofactor. It depends on Mn(2+) as a cofactor.

The enzyme catalyses NAD(+) + (deoxyribonucleotide)n-3'-hydroxyl + 5'-phospho-(deoxyribonucleotide)m = (deoxyribonucleotide)n+m + AMP + beta-nicotinamide D-nucleotide.. Its function is as follows. DNA ligase that catalyzes the formation of phosphodiester linkages between 5'-phosphoryl and 3'-hydroxyl groups in double-stranded DNA using NAD as a coenzyme and as the energy source for the reaction. It is essential for DNA replication and repair of damaged DNA. The sequence is that of DNA ligase from Shigella flexneri serotype 5b (strain 8401).